The sequence spans 481 residues: UDP-glycosyltransferase 88F3 (481 aa).

UDP-alpha-D-glucose is bound by residues Ser288, 357 to 358 (WA), 375 to 383 (HCGWNSVLE), and 397 to 400 (YAEQ).

It belongs to the UDP-glycosyltransferase family.

Functionally, glycosyltransferase that may possess chalcone and dihydrochalcone 2'-O-glucosyltransferase activity. In Pyrus communis (Pear), this protein is UDP-glycosyltransferase 88F3.